The sequence spans 216 residues: Trimethylamine corrinoid protein 1 (216 aa).

A B12-binding N-terminal domain is found at 1 to 92 (MANKEEIIAK…EMEKRKSQTK (92 aa)). In terms of domain architecture, B12-binding spans 94 to 216 (LGTIVIGTIE…VVSKVKAALL (123 aa)). Residue H107 participates in methylcob(III)alamin binding.

The protein belongs to the methylamine corrinoid protein family. In terms of assembly, can form a complex with MttB.

Its pathway is one-carbon metabolism; methanogenesis from trimethylamine. Functionally, acts probably as a methyl group carrier between MttB and either MtbA or MtaA. The sequence is that of Trimethylamine corrinoid protein 1 (mttC1) from Methanosarcina mazei (strain ATCC BAA-159 / DSM 3647 / Goe1 / Go1 / JCM 11833 / OCM 88) (Methanosarcina frisia).